The chain runs to 200 residues: CASP-like protein 1D2 (200 aa).

The segment at 1-26 is disordered; sequence MASTENPDPETGKSEPIPASATTPPP. Residues 1–36 are Cytoplasmic-facing; sequence MASTENPDPETGKSEPIPASATTPPPSAASFLDCRK. Residues 37-57 traverse the membrane as a helical segment; the sequence is IDVIIRVLLFSATLTALIVMV. Topologically, residues 58 to 85 are extracellular; that stretch reads TSDQTEKTQLPGVSSPAPVSAEFNDSPA. A helical membrane pass occupies residues 86 to 106; it reads FIFFVVALVVTSFYALMSTLV. Residues 107–129 are Cytoplasmic-facing; it reads SISLLLKPEFTARVSVYLASLDM. A helical membrane pass occupies residues 130-150; it reads VMLGILASATGTAGGVAYIAL. Residues 151 to 171 lie on the Extracellular side of the membrane; sequence KGNKEVGWNKICNVYDKFCRY. A helical transmembrane segment spans residues 172–192; the sequence is IATSLALSLFATLLLLVLSIC. At 193–200 the chain is on the cytoplasmic side; the sequence is SALSKRTP.

This sequence belongs to the Casparian strip membrane proteins (CASP) family. Homodimer and heterodimers.

It is found in the cell membrane. In Arabidopsis lyrata subsp. lyrata (Lyre-leaved rock-cress), this protein is CASP-like protein 1D2.